A 208-amino-acid polypeptide reads, in one-letter code: Glutathione S-transferase P (208 aa).

Residues 1-78 (MTLKLTYFDI…HLARLNGLNG (78 aa)) enclose the GST N-terminal domain. Glutathione is bound by residues Y7, W38, K42, 49–50 (QV), and 62–63 (QS). Residues 80 to 202 (NETETTFIDM…NKRAAINPPV (123 aa)) enclose the GST C-terminal domain.

This sequence belongs to the GST superfamily. Pi family. In terms of assembly, homodimer. As to expression, expressed in dopaminergic (DA) neuron (at protein levels).

It catalyses the reaction RX + glutathione = an S-substituted glutathione + a halide anion + H(+). Functionally, conjugation of reduced glutathione to a wide number of exogenous and endogenous hydrophobic electrophiles. Prevents dopaminergic CEP neuron degeneration in response to Mn(2+). This chain is Glutathione S-transferase P (gst-1), found in Caenorhabditis elegans.